A 60-amino-acid chain; its full sequence is Arabinogalactan protein 12 (60 aa).

A signal peptide spans 1–27 (MESMKMKLIVVLMVAIVAFSAVGNVAA). Q28 is modified (pyrrolidone carboxylic acid). P32, P34, and P36 each carry 4-hydroxyproline. O-linked (Ara...) hydroxyproline glycosylation is found at P32, P34, and P36. A lipid anchor (GPI-anchor amidated serine) is attached at S38. The propeptide at 39–60 (DAAMFVPALFASVAALASGFLF) is removed in mature form.

Belongs to the AG-peptide AGP family. In terms of processing, contains 4-hydroxyproline; hydroxylated on Pro-32, Pro-34 and Pro-36. O-glycosylated on hydroxyprolines; noncontiguous hydroxylproline residues are glycosylated with arabinogalactan. In terms of tissue distribution, expressed in reproductive tissues. Expressed in chalaza, funiculus, stigma, septum, style and transmitting tract.

Its subcellular location is the cell membrane. Functionally, proteoglycan that seems to be implicated in diverse developmental roles such as differentiation, cell-cell recognition, embryogenesis and programmed cell death. The sequence is that of Arabinogalactan protein 12 from Arabidopsis thaliana (Mouse-ear cress).